The sequence spans 235 residues: Small ribosomal subunit protein eS4 (235 aa).

Residues 38 to 101 enclose the S4 RNA-binding domain; it reads IPLLVLVRDF…EKSYRILFDE (64 aa).

The protein belongs to the eukaryotic ribosomal protein eS4 family.

This is Small ribosomal subunit protein eS4 (rps4e) from Archaeoglobus fulgidus (strain ATCC 49558 / DSM 4304 / JCM 9628 / NBRC 100126 / VC-16).